A 90-amino-acid polypeptide reads, in one-letter code: Small ribosomal subunit protein uS15c (90 aa).

It belongs to the universal ribosomal protein uS15 family. In terms of assembly, part of the 30S ribosomal subunit.

The protein localises to the plastid. It is found in the chloroplast. In Lolium perenne (Perennial ryegrass), this protein is Small ribosomal subunit protein uS15c (rps15-A).